A 285-amino-acid chain; its full sequence is Putative pyruvate, phosphate dikinase regulatory protein (285 aa).

165–172 (GVSRTSKT) is an ADP binding site.

Belongs to the pyruvate, phosphate/water dikinase regulatory protein family. PDRP subfamily.

It carries out the reaction N(tele)-phospho-L-histidyl/L-threonyl-[pyruvate, phosphate dikinase] + ADP = N(tele)-phospho-L-histidyl/O-phospho-L-threonyl-[pyruvate, phosphate dikinase] + AMP + H(+). It catalyses the reaction N(tele)-phospho-L-histidyl/O-phospho-L-threonyl-[pyruvate, phosphate dikinase] + phosphate + H(+) = N(tele)-phospho-L-histidyl/L-threonyl-[pyruvate, phosphate dikinase] + diphosphate. Bifunctional serine/threonine kinase and phosphorylase involved in the regulation of the pyruvate, phosphate dikinase (PPDK) by catalyzing its phosphorylation/dephosphorylation. In Lactobacillus delbrueckii subsp. bulgaricus (strain ATCC 11842 / DSM 20081 / BCRC 10696 / JCM 1002 / NBRC 13953 / NCIMB 11778 / NCTC 12712 / WDCM 00102 / Lb 14), this protein is Putative pyruvate, phosphate dikinase regulatory protein.